We begin with the raw amino-acid sequence, 343 residues long: Isopentenyl-diphosphate delta-isomerase (343 aa).

9-10 (RK) is a binding site for substrate. Residues S67, 68–70 (AMT), S98, and N127 each bind FMN. 98–100 (SQR) is a substrate binding site. Position 162 (Q162) interacts with substrate. E163 contacts Mg(2+). FMN-binding positions include K194, T224, 273 to 275 (GVR), and 294 to 295 (AA).

The protein belongs to the IPP isomerase type 2 family. Homooctamer. Dimer of tetramers. It depends on FMN as a cofactor. Requires NADPH as cofactor. Mg(2+) is required as a cofactor.

The protein resides in the cytoplasm. It carries out the reaction isopentenyl diphosphate = dimethylallyl diphosphate. Its function is as follows. Involved in the biosynthesis of isoprenoids. Catalyzes the 1,3-allylic rearrangement of the homoallylic substrate isopentenyl (IPP) to its allylic isomer, dimethylallyl diphosphate (DMAPP). This Xanthobacter autotrophicus (strain ATCC BAA-1158 / Py2) protein is Isopentenyl-diphosphate delta-isomerase.